The primary structure comprises 286 residues: 2-dehydro-3-deoxyphosphooctonate aldolase (286 aa).

It belongs to the KdsA family.

The protein localises to the cytoplasm. It catalyses the reaction D-arabinose 5-phosphate + phosphoenolpyruvate + H2O = 3-deoxy-alpha-D-manno-2-octulosonate-8-phosphate + phosphate. It functions in the pathway carbohydrate biosynthesis; 3-deoxy-D-manno-octulosonate biosynthesis; 3-deoxy-D-manno-octulosonate from D-ribulose 5-phosphate: step 2/3. Its pathway is bacterial outer membrane biogenesis; lipopolysaccharide biosynthesis. This is 2-dehydro-3-deoxyphosphooctonate aldolase from Haemophilus ducreyi (strain 35000HP / ATCC 700724).